A 117-amino-acid chain; its full sequence is Large ribosomal subunit protein bL17 (117 aa).

This sequence belongs to the bacterial ribosomal protein bL17 family. As to quaternary structure, part of the 50S ribosomal subunit. Contacts protein L32.

This Campylobacter jejuni subsp. jejuni serotype O:6 (strain 81116 / NCTC 11828) protein is Large ribosomal subunit protein bL17.